The chain runs to 110 residues: UPF0060 membrane protein Bcen_0802 (110 aa).

4 helical membrane passes run 9–29 (ALFAATALAEIVGCYLPWLVL), 34–54 (PAWLLVPAALSLALFAWLLTL), 66–86 (YGGVYIAVALIWLRVVDGVAL), and 88–108 (RWDVAGAVLALGGMAVIALQP).

This sequence belongs to the UPF0060 family.

The protein localises to the cell inner membrane. In Burkholderia orbicola (strain AU 1054), this protein is UPF0060 membrane protein Bcen_0802.